The sequence spans 90 residues: Small ribosomal subunit protein bS16 (90 aa).

The protein belongs to the bacterial ribosomal protein bS16 family.

The sequence is that of Small ribosomal subunit protein bS16 from Streptococcus sanguinis (strain SK36).